Consider the following 36-residue polypeptide: Photosystem I reaction center subunit VIII (36 aa).

A helical transmembrane segment spans residues 10-29 (FVPLVGLVFPAIAMASLFLY).

The protein belongs to the PsaI family.

The protein localises to the plastid. It localises to the chloroplast thylakoid membrane. Its function is as follows. May help in the organization of the PsaL subunit. This is Photosystem I reaction center subunit VIII from Oryza nivara (Indian wild rice).